A 542-amino-acid polypeptide reads, in one-letter code: Chaperonin GroEL 3 (542 aa).

Residues 29–32, 86–90, glycine 413, 477–479, and aspartate 493 contribute to the ATP site; these read TLGP, DGTTT, and NAA.

It belongs to the chaperonin (HSP60) family. In terms of assembly, forms a cylinder of 14 subunits composed of two heptameric rings stacked back-to-back. Interacts with the co-chaperonin GroES.

Its subcellular location is the cytoplasm. The catalysed reaction is ATP + H2O + a folded polypeptide = ADP + phosphate + an unfolded polypeptide.. In terms of biological role, together with its co-chaperonin GroES, plays an essential role in assisting protein folding. The GroEL-GroES system forms a nano-cage that allows encapsulation of the non-native substrate proteins and provides a physical environment optimized to promote and accelerate protein folding. The chain is Chaperonin GroEL 3 from Frankia alni (strain DSM 45986 / CECT 9034 / ACN14a).